Consider the following 197-residue polypeptide: Lactoylglutathione lyase-like protein terB (197 aa).

The N-terminal stretch at 1 to 19 (MARFAVLQLLLPLAAGLTG) is a signal peptide. Asn-82, Asn-99, and Asn-140 each carry an N-linked (GlcNAc...) asparagine glycan.

It belongs to the glyoxalase I family.

Lactoylglutathione lyase-like protein; part of the gene cluster that mediates the biosynthesis of terrein, a fungal metabolite with ecological, antimicrobial, antiproliferative, and antioxidative activities. The first step in the pathway is performed by the polyketide synthase terA that produces 4-hydroxy-6-methylpyranon (4-HMP), orsellinic acid (OA), and 2,3-dehydro-6-hydroxymellein (2,3-dehydro-6-HM) by condensing acetyl-CoA with two, three, or four malonyl-CoA units, respectively. 4-HMP and OA are not pathway intermediates, but are rather shunt or side products. 2,3-dehydro-6-HM is further converted to 6-hydroxymellein (6-HM) by the 6-hydroxymellein synthase terB. The monooxygenases terC and terD, the multicopper oxidase terE and the Kelch-like protein terF are then involved in the transformation of 6-HM to terrein. Even if they are co-regulated with the other terrein cluster genes, terH and terI seem to be dispensable for terrein production; whereas one or both of the 2 transporters terG and terJ are probably required for efficient secretion of metabolites. The polypeptide is Lactoylglutathione lyase-like protein terB (Aspergillus terreus (strain NIH 2624 / FGSC A1156)).